A 964-amino-acid polypeptide reads, in one-letter code: Vitamin B12-dependent ribonucleotide reductase (964 aa).

A disordered region spans residues 1–21 (MTETASGPARGSRAKGTKAKG). A compositionally biased stretch (basic residues) spans 12-21 (SRAKGTKAKG). Substrate contacts are provided by residues Ser-142, 158 to 159 (AC), Gly-187, 363 to 367 (NPCSE), and 553 to 557 (PTGTI). A disulfide bridge links Cys-159 with Cys-376. Residue Asn-363 is the Proton acceptor of the active site. Cys-365 serves as the catalytic Cysteine radical intermediate. The active-site Proton acceptor is the Glu-367.

It belongs to the ribonucleoside diphosphate reductase class-2 family. The cofactor is adenosylcob(III)alamin.

The catalysed reaction is a 2'-deoxyribonucleoside 5'-diphosphate + [thioredoxin]-disulfide + H2O = a ribonucleoside 5'-diphosphate + [thioredoxin]-dithiol. In terms of biological role, catalyzes the reduction of ribonucleotides to deoxyribonucleotides. May function to provide a pool of deoxyribonucleotide precursors for DNA repair during oxygen limitation and/or for immediate growth after restoration of oxygen. The chain is Vitamin B12-dependent ribonucleotide reductase (nrdJ) from Streptomyces avermitilis (strain ATCC 31267 / DSM 46492 / JCM 5070 / NBRC 14893 / NCIMB 12804 / NRRL 8165 / MA-4680).